A 431-amino-acid chain; its full sequence is 5-methylthioadenosine/S-adenosylhomocysteine deaminase (431 aa).

His-68 and His-70 together coordinate Zn(2+). Positions 97 and 186 each coordinate substrate. Position 213 (His-213) interacts with Zn(2+). Substrate-binding residues include Glu-216 and Asp-301. Asp-301 contributes to the Zn(2+) binding site.

The protein belongs to the metallo-dependent hydrolases superfamily. MTA/SAH deaminase family. Zn(2+) is required as a cofactor.

It carries out the reaction S-adenosyl-L-homocysteine + H2O + H(+) = S-inosyl-L-homocysteine + NH4(+). The enzyme catalyses S-methyl-5'-thioadenosine + H2O + H(+) = S-methyl-5'-thioinosine + NH4(+). Catalyzes the deamination of 5-methylthioadenosine and S-adenosyl-L-homocysteine into 5-methylthioinosine and S-inosyl-L-homocysteine, respectively. Is also able to deaminate adenosine. In Halothermothrix orenii (strain H 168 / OCM 544 / DSM 9562), this protein is 5-methylthioadenosine/S-adenosylhomocysteine deaminase.